The primary structure comprises 343 residues: Glycerol-3-phosphate dehydrogenase [NAD(P)+] (343 aa).

The NADPH site is built by Trp29, Arg49, and Lys122. Lys122, Gly150, and Ser152 together coordinate sn-glycerol 3-phosphate. Residue Ala154 participates in NADPH binding. The sn-glycerol 3-phosphate site is built by Lys205, Asp258, Ser268, Arg269, and Asn270. Lys205 (proton acceptor) is an active-site residue. Arg269 contributes to the NADPH binding site. NADPH-binding residues include Leu288 and Glu290.

Belongs to the NAD-dependent glycerol-3-phosphate dehydrogenase family.

It localises to the cytoplasm. It catalyses the reaction sn-glycerol 3-phosphate + NAD(+) = dihydroxyacetone phosphate + NADH + H(+). It carries out the reaction sn-glycerol 3-phosphate + NADP(+) = dihydroxyacetone phosphate + NADPH + H(+). The protein operates within membrane lipid metabolism; glycerophospholipid metabolism. Catalyzes the reduction of the glycolytic intermediate dihydroxyacetone phosphate (DHAP) to sn-glycerol 3-phosphate (G3P), the key precursor for phospholipid synthesis. In Mesorhizobium japonicum (strain LMG 29417 / CECT 9101 / MAFF 303099) (Mesorhizobium loti (strain MAFF 303099)), this protein is Glycerol-3-phosphate dehydrogenase [NAD(P)+].